Consider the following 682-residue polypeptide: DNA-directed RNA polymerase subunit beta' (682 aa).

4 residues coordinate Zn(2+): C69, C71, C87, and C90. D491, D493, and D495 together coordinate Mg(2+).

It belongs to the RNA polymerase beta' chain family. RpoC1 subfamily. In terms of assembly, in plastids the minimal PEP RNA polymerase catalytic core is composed of four subunits: alpha, beta, beta', and beta''. When a (nuclear-encoded) sigma factor is associated with the core the holoenzyme is formed, which can initiate transcription. Requires Mg(2+) as cofactor. It depends on Zn(2+) as a cofactor.

It localises to the plastid. It is found in the chloroplast. The enzyme catalyses RNA(n) + a ribonucleoside 5'-triphosphate = RNA(n+1) + diphosphate. DNA-dependent RNA polymerase catalyzes the transcription of DNA into RNA using the four ribonucleoside triphosphates as substrates. In Lotus japonicus (Lotus corniculatus var. japonicus), this protein is DNA-directed RNA polymerase subunit beta'.